The following is a 1203-amino-acid chain: DNA-directed RNA polymerase subunit beta (1203 aa).

The segment covering 1174 to 1195 (AAQEAKAAFEAEEAEKATKAEA) has biased composition (basic and acidic residues). The disordered stretch occupies residues 1174–1203 (AAQEAKAAFEAEEAEKATKAEATEEAAEQE).

This sequence belongs to the RNA polymerase beta chain family. The RNAP catalytic core consists of 2 alpha, 1 beta, 1 beta' and 1 omega subunit. When a sigma factor is associated with the core the holoenzyme is formed, which can initiate transcription.

The enzyme catalyses RNA(n) + a ribonucleoside 5'-triphosphate = RNA(n+1) + diphosphate. DNA-dependent RNA polymerase catalyzes the transcription of DNA into RNA using the four ribonucleoside triphosphates as substrates. The protein is DNA-directed RNA polymerase subunit beta of Streptococcus pneumoniae (strain ATCC 700669 / Spain 23F-1).